Reading from the N-terminus, the 1717-residue chain is MSGTSSPEAVKKLLENMQSDLRALSLECKKKFPPVKEAAESGIIKVKTIAARNTEILAALKENSSEVVQPFLMGCGTKEPKITQLCLAAIQRLMSHEVVSETAAGNIINMLWQLMENSLEELKLLQTVLVLLTTNTVVHDEALSKAIVLCFRLHFTKDNITNNTAAATVRQVVTVVFERMVAEDERHRDIIEQPVLVQGNSNRRSVSTLKPCAKDAYMLFQDLCQLVNADAPYWLVGMTEMTRTFGLELLESVLNDFPQVFLQHQEFSFLLKERVCPLVIKLFSPNIKFRQGSSTSSSPAPVEKPYFPICMRLLRVVSVLIKQFYSLLVTECEIFLSLLVKFLDADKPQWLRAVAVESIHRFCVQPQLLRSFCQSYDMKQHSTKVFRDIVNALGSFIQSLFLVPPTGNPATSNQAGNNNLGGSVSAPANSGMVGIGGGVTLLPAFEYRGTWIPILTITVQGSAKATYLEMLDKVEPPTIPEGYAMSVAFHCLLDLVRGITSMIEGELGELETECQTTTEEGSSPTQSTEQQDLQSTSDQMDKEIVSRAVWEEMVNACWCGLLAALSLLLDASTDEAATENILKAELTMAALCGRLGLVTSRDAFITAICKGSLPPHYALTVLNTTTAATLSNKSYSVQGQSVMMISPSSESHQQVVAVGQPLAVQPQGTVMLTSKNIQCMRTLLNLAHCHGAVLGTSWQLVLATLQHLVWILGLKPSSGGALKPGRAVEGPSTVLTTAVMTDLPVISNILSRLFESSQYLDDVSLHHLINALCSLSLEAMDMAYGNNKEPSLFAVAKLLETGLVNMHRIEILWRPLTGHLLEVCQHPNSRMREWGAEALTSLIKAGLTFNHDPPLSQNQRLQLLLLNPLKEMSNINHPDIRLKQLECVLQILQSQGDSLGPGWPLVLGVMGAIRNDQGESLIRTAFQCLQLVVTDFLPTMPCTCLQIVVDVAGSFGLHNQELNISLTSIGLLWNISDYFFQRGETIEKELNKEEAAQQKQAEEKGVVLNRPFHPAPPFDCLWLCLYAKLGELCVDPRPAVRKSAGQTLFSTIGAHGTLLQHSTWHTVIWKVLFHLLDRVRESSTTADKEKIESGGGNILIHHSRDTAEKQWAETWVLTLAGVARIFNTRRYLLQPLGDFSRAWDVLLDHIQSAALSKNNEVSLAALKSFQEILQIVSPVRDSDKPETPPVVNVPVPVLIGPISGMSRPFVRTDSIGEKLGRYSSSEPPIVTDELEDLNLWWAAWNTWYRIGSESTKPPITFDKLTFIPSQPFLTALIQIFPALYQHIKTGFNMDDLQKLGVILHSAISVPISSDASPFILPSYTEAVLTSLQEAVLTALDVLQKAICVGPENMQIMYPAIFDQLLAFVEFSCKPPQYGQLETKHIANAKYNQIQLFAPAEWVALNYVPFAERSLEVVVDLYQKTACHKAVVNEKVLQNIIKTLRVPLSLKYSCPSESTWKLAVSSLLRVLSIGLPVARQHASSGKFDSMWPELANTFEDFLFTKSIPPDNLSIQEFQRNENIDVEVVQLISNEILPYANFIPKEFVGQIMTMLNKGSIHSQSSSFTEAEIDIRLREEFSKMCFETLLQFSFSNKVTTPQEGYISRMALSVLLKRSQDVLHRYIEDERLSGKCPLPRQQVTEIIFVLKAVSTLIDSLKKTQPENVDGNTWAQVIALYPTLVECITCSSSEVCSALKEALVPFKDFMQPPASRVQNGES.

At S2 the chain carries N-acetylserine. A phosphoserine mark is found at S205 and S537. The segment at 511 to 538 (ETECQTTTEEGSSPTQSTEQQDLQSTSD) is disordered. Residues 522-538 (SSPTQSTEQQDLQSTSD) show a composition bias toward polar residues.

The protein belongs to the MON2 family. In terms of assembly, homooligomer. Heterotrimer with ATP9A and DOP1B; this interaction is retromer-independent. Interacts with SNX3.

It localises to the early endosome membrane. Plays a role in regulating membrane trafficking of cargo proteins. Together with ATP9A and DOP1B, regulates SNX3 retromer-mediated endosomal sorting of WLS away from lysosomal degradation. The chain is Protein MON2 homolog from Homo sapiens (Human).